Reading from the N-terminus, the 160-residue chain is Large ribosomal subunit protein eL21 (160 aa).

2 stretches are compositionally biased toward basic and acidic residues: residues 112–123 (NDQKKKEAKEKG) and 136–146 (REAHFVRTNGK). Residues 112–146 (NDQKKKEAKEKGTWVQLNGQPAPPREAHFVRTNGK) are disordered.

The protein belongs to the eukaryotic ribosomal protein eL21 family. As to quaternary structure, component of the large ribosomal subunit.

Its subcellular location is the cytoplasm. The protein localises to the cytosol. It is found in the endoplasmic reticulum. Functionally, component of the large ribosomal subunit. The ribosome is a large ribonucleoprotein complex responsible for the synthesis of proteins in the cell. In Rattus norvegicus (Rat), this protein is Large ribosomal subunit protein eL21 (Rpl21).